The sequence spans 167 residues: Urease accessory protein UreE (167 aa).

A disordered region spans residues 137 to 158; it reads EAGAYQSAPHGHSHSHAHGHDH.

It belongs to the UreE family.

It localises to the cytoplasm. In terms of biological role, involved in urease metallocenter assembly. Binds nickel. Probably functions as a nickel donor during metallocenter assembly. The chain is Urease accessory protein UreE from Pseudomonas putida (strain ATCC 700007 / DSM 6899 / JCM 31910 / BCRC 17059 / LMG 24140 / F1).